Reading from the N-terminus, the 314-residue chain is Protoheme IX farnesyltransferase (314 aa).

8 consecutive transmembrane segments (helical) span residues 30–50, 51–71, 122–142, 151–171, 178–198, 224–244, 247–267, and 285–305; these read VMSLVVFTALVGLQAAPVSVH, PVIGFASILFVAIGAGASGAL, FLAAGLLAFTIFFYAVIYSMW, IVIGGAAGAFPPVIGWVIATG, WLMFALIFMWTPPHFWALALF, IIAYTVLLAVLAVGTGFSAIG, VYLAAALVLNALFLKGAIDIW, and FFRLSLWYLFAHFGAILLESA.

Belongs to the UbiA prenyltransferase family. Protoheme IX farnesyltransferase subfamily. As to quaternary structure, interacts with CtaA.

It is found in the cell inner membrane. The enzyme catalyses heme b + (2E,6E)-farnesyl diphosphate + H2O = Fe(II)-heme o + diphosphate. It participates in porphyrin-containing compound metabolism; heme O biosynthesis; heme O from protoheme: step 1/1. Converts heme B (protoheme IX) to heme O by substitution of the vinyl group on carbon 2 of heme B porphyrin ring with a hydroxyethyl farnesyl side group. The sequence is that of Protoheme IX farnesyltransferase from Roseobacter denitrificans (strain ATCC 33942 / OCh 114) (Erythrobacter sp. (strain OCh 114)).